We begin with the raw amino-acid sequence, 580 residues long: mRNA-decapping enzyme 1A (580 aa).

Ser-62 bears the Phosphoserine mark. Positions 132–141 are enriched in basic and acidic residues; sequence RSQQAARDKQ. Disordered stretches follow at residues 132–154, 172–209, and 245–276; these read RSQQ…DHRP, QMGD…QDKS, and LPGD…NMGI. Phosphoserine occurs at positions 142, 179, and 180. A compositionally biased stretch (polar residues) spans 173 to 196; it reads MGDSNISSPGLQPSTQISNLGSTE. Over residues 253–264 the composition is skewed to low complexity; that stretch reads EPSSFLPFSFEP. A phosphoserine mark is found at Ser-319 and Ser-334. The segment covering 343–359 has biased composition (polar residues); that stretch reads QAVKTTPRQRSPLSSQP. The tract at residues 343 to 371 is disordered; sequence QAVKTTPRQRSPLSSQPVPELSQASLAAS. A Phosphothreonine modification is found at Thr-348. The residue at position 353 (Ser-353) is a Phosphoserine. Arg-376 carries the asymmetric dimethylarginine modification. The residue at position 401 (Thr-401) is a Phosphothreonine. Phosphoserine occurs at positions 422, 520, 521, and 523. Residues 510 to 533 are disordered; that stretch reads TRSSDLERKASSPSPLTVGTSENQ. Over residues 520 to 531 the composition is skewed to polar residues; that stretch reads SSPSPLTVGTSE. Thr-526 and Thr-529 each carry phosphothreonine.

Belongs to the DCP1 family. As to quaternary structure, forms a complex with EDC3, DCP2, DDX6 and EDC4/HEDLS, within this complex directly interacts with EDC3. Part of a cytoplasmic complex containing proteins involved in mRNA decay, including XRN1 and LSM1. Interacts with DCP1B. Interacts with DCP2. Interacts with DDX17 in an RNA-independent manner. Interacts with PNRC2. Interacts with SMAD4. Interacts with UPF1. Interacts with ZC3HAV1. Interacts with ZFP36L1. Interacts with NBDY. Interacts with DHX34; the interaction is RNA-independent. (Microbial infection) Cleaved by porcine reproductive and respiratory syndrome virus serine protease nsp4 after Glu-238. The cleavage inhibits DCP1A function.

The protein resides in the cytoplasm. Its subcellular location is the P-body. It localises to the nucleus. It catalyses the reaction a 5'-end (N(7)-methyl 5'-triphosphoguanosine)-ribonucleoside in mRNA + H2O = N(7)-methyl-GDP + a 5'-end phospho-ribonucleoside in mRNA + 2 H(+). Necessary for the degradation of mRNAs, both in normal mRNA turnover and in nonsense-mediated mRNA decay. Removes the 7-methyl guanine cap structure from mRNA molecules, yielding a 5'-phosphorylated mRNA fragment and 7m-GDP. Contributes to the transactivation of target genes after stimulation by TGFB1. Essential for embryonic development. The protein is mRNA-decapping enzyme 1A (DCP1A) of Sus scrofa (Pig).